The sequence spans 344 residues: L-rhamnose-proton symporter (344 aa).

10 helical membrane-spanning segments follow: residues 4 to 24, 38 to 58, 68 to 88, 101 to 121, 137 to 157, 175 to 195, 214 to 234, 259 to 279, 290 to 310, and 323 to 343; these read AITM…CFYA, WSVG…ALLL, FSLS…IGNI, MGIG…TPII, TLLG…AGQL, LVLA…MNAA, LPSY…FCFI, VLLS…YAWG, ISWM…GLVL, and VLSL…IGMA.

The protein belongs to the L-rhamnose transporter (TC 2.A.7.6) family.

The protein localises to the cell inner membrane. The catalysed reaction is L-rhamnopyranose(in) + H(+)(in) = L-rhamnopyranose(out) + H(+)(out). In terms of biological role, uptake of L-rhamnose across the cytoplasmic membrane with the concomitant transport of protons into the cell (symport system). The sequence is that of L-rhamnose-proton symporter from Shigella sonnei (strain Ss046).